Here is a 265-residue protein sequence, read N- to C-terminus: tRNA pseudouridine synthase A (265 aa).

The active-site Nucleophile is the Asp-58. A substrate-binding site is contributed by Tyr-116.

This sequence belongs to the tRNA pseudouridine synthase TruA family. As to quaternary structure, homodimer.

It carries out the reaction uridine(38/39/40) in tRNA = pseudouridine(38/39/40) in tRNA. Functionally, formation of pseudouridine at positions 38, 39 and 40 in the anticodon stem and loop of transfer RNAs. This is tRNA pseudouridine synthase A from Neisseria gonorrhoeae (strain NCCP11945).